The sequence spans 372 residues: Glutamate 5-kinase (372 aa).

Residue Lys14 coordinates ATP. Residues Ser55, Asp142, and Asn154 each contribute to the substrate site. ATP-binding positions include Ser174–Asp175 and Thr216–Lys222. Residues Gln279–Lys357 enclose the PUA domain.

Belongs to the glutamate 5-kinase family.

Its subcellular location is the cytoplasm. It catalyses the reaction L-glutamate + ATP = L-glutamyl 5-phosphate + ADP. Its pathway is amino-acid biosynthesis; L-proline biosynthesis; L-glutamate 5-semialdehyde from L-glutamate: step 1/2. Functionally, catalyzes the transfer of a phosphate group to glutamate to form L-glutamate 5-phosphate. The sequence is that of Glutamate 5-kinase from Carboxydothermus hydrogenoformans (strain ATCC BAA-161 / DSM 6008 / Z-2901).